The primary structure comprises 244 residues: Krueppel-like factor 9 (244 aa).

Disordered regions lie at residues 26–51 (EHGG…GDPG) and 79–143 (PSVC…EKRH). Over residues 32 to 51 (EAERLRLPEREVTKEHGDPG) the composition is skewed to basic and acidic residues. Ser-122 bears the Phosphoserine mark. Positions 134 to 143 (KGKHASEKRH) are enriched in basic residues. C2H2-type zinc fingers lie at residues 143–167 (HKCP…YRVH), 173–197 (FPCT…YRTH), and 203–225 (FRCP…ARRH).

This sequence belongs to the Sp1 C2H2-type zinc-finger protein family. In terms of assembly, interacts with ZZEF1.

It localises to the nucleus. Its function is as follows. Transcription factor that binds to GC box promoter elements. Selectively activates mRNA synthesis from genes containing tandem repeats of GC boxes but represses genes with a single GC box. Acts as an epidermal circadian transcription factor regulating keratinocyte proliferation. The protein is Krueppel-like factor 9 (Klf9) of Mus musculus (Mouse).